The following is a 401-amino-acid chain: Subtilisin-like protease 7 (401 aa).

The N-terminal stretch at 1-20 is a signal peptide; that stretch reads MGFITKAIPLALAAASVING. Positions 21–119 are excised as a propeptide; it reads AEILETRAGV…IERDARVQIN (99 aa). One can recognise an Inhibitor I9 domain in the interval 36 to 118; sequence KYIVVMNDGM…YIERDARVQI (83 aa). Asparagine 58 carries N-linked (GlcNAc...) asparagine glycosylation. The Peptidase S8 domain maps to 129-401; it reads SWGLARVGSR…SKLINNGSGM (273 aa). Active-site charge relay system residues include aspartate 161 and histidine 193. 2 N-linked (GlcNAc...) asparagine glycosylation sites follow: asparagine 223 and asparagine 253. Residue serine 347 is the Charge relay system of the active site. N-linked (GlcNAc...) asparagine glycosylation is present at asparagine 397.

This sequence belongs to the peptidase S8 family.

It localises to the secreted. Functionally, secreted subtilisin-like serine protease with keratinolytic activity that contributes to pathogenicity. This is Subtilisin-like protease 7 (SUB7) from Trichophyton equinum (Horse ringworm fungus).